The following is a 525-amino-acid chain: Ankyrin repeat and SOCS box protein 3 (525 aa).

ANK repeat units follow at residues 9-38 (DTCS…SIDV), 42-71 (RGWM…SENY), 78-107 (EGFC…DPNA), 111-140 (EETT…NVNG), 145-174 (CGWN…NKEC), 178-207 (FGIT…DVNC), 211-240 (DKAT…DPDL), 246-275 (NWQL…RVCD), 279-308 (NKVS…SPDA), 315-346 (GFSS…QLNE), and 348-373 (HLAY…PSTP). Positions 441-505 (MLSARASNSS…HDYLLYAEVL (65 aa)) constitute an SOCS box domain.

It belongs to the ankyrin SOCS box (ASB) family. In terms of assembly, interacts with ELOB and TNFRSF1B.

It functions in the pathway protein modification; protein ubiquitination. In terms of biological role, probable substrate-recognition component of a SCF-like ECS (Elongin-Cullin-SOCS-box protein) E3 ubiquitin-protein ligase complex which mediates the ubiquitination and subsequent proteasomal degradation of target proteins. Recognizes TNFRSF1B. This Bos taurus (Bovine) protein is Ankyrin repeat and SOCS box protein 3 (ASB3).